Here is a 275-residue protein sequence, read N- to C-terminus: Dermonecrotic toxin SpeSicTox-betaIIA2ii (275 aa).

H5 is a catalytic residue. Mg(2+)-binding residues include E25 and D27. Catalysis depends on H41, which acts as the Nucleophile. Intrachain disulfides connect C45–C51 and C47–C190. D85 lines the Mg(2+) pocket.

This sequence belongs to the arthropod phospholipase D family. Class II subfamily. The cofactor is Mg(2+). In terms of tissue distribution, expressed by the venom gland.

It is found in the secreted. It carries out the reaction an N-(acyl)-sphingosylphosphocholine = an N-(acyl)-sphingosyl-1,3-cyclic phosphate + choline. The enzyme catalyses an N-(acyl)-sphingosylphosphoethanolamine = an N-(acyl)-sphingosyl-1,3-cyclic phosphate + ethanolamine. The catalysed reaction is a 1-acyl-sn-glycero-3-phosphocholine = a 1-acyl-sn-glycero-2,3-cyclic phosphate + choline. It catalyses the reaction a 1-acyl-sn-glycero-3-phosphoethanolamine = a 1-acyl-sn-glycero-2,3-cyclic phosphate + ethanolamine. Functionally, dermonecrotic toxins cleave the phosphodiester linkage between the phosphate and headgroup of certain phospholipids (sphingolipid and lysolipid substrates), forming an alcohol (often choline) and a cyclic phosphate. This toxin acts on sphingomyelin (SM). It may also act on ceramide phosphoethanolamine (CPE), lysophosphatidylcholine (LPC) and lysophosphatidylethanolamine (LPE), but not on lysophosphatidylserine (LPS), and lysophosphatidylglycerol (LPG). It acts by transphosphatidylation, releasing exclusively cyclic phosphate products as second products. Induces dermonecrosis, hemolysis, increased vascular permeability, edema, inflammatory response, and platelet aggregation. The chain is Dermonecrotic toxin SpeSicTox-betaIIA2ii from Sicarius peruensis (Six-eyed sand spider).